A 206-amino-acid polypeptide reads, in one-letter code: Macrophage immunometabolism regulator (206 aa).

M1 is subject to N-acetylmethionine. Residues M1 to C41 are disordered. S25, S140, and S167 each carry phosphoserine.

This sequence belongs to the UNC119-binding protein family. In terms of assembly, interacts with UNC119 and UNC119B; interaction preferentially takes place when UNC119 and UNC119B are unliganded with myristoylated proteins. Phosphorylated. High expression in normal macrophages, monocytes, and cultured rheumatoid arthritis synovial fibroblasts (RASFs), with lower expression in B- and T-cells, and little to no expression in other tissues and cell lines.

It is found in the cytoplasm. Its subcellular location is the cell projection. The protein localises to the cilium. Regulates the macrophage function, by enhancing the resolution of inflammation and wound repair functions mediated by M2 macrophages. The regulation of macrophage function is, due at least in part, to its ability to inhibit glycolysis. May also play a role in trafficking of proteins via its interaction with UNC119 and UNC119B cargo adapters: may help the release of UNC119 and UNC119B cargo or the recycling of UNC119 and UNC119B. May play a role in ciliary membrane localization via its interaction with UNC119B and protein transport into photoreceptor cells. This is Macrophage immunometabolism regulator from Homo sapiens (Human).